The chain runs to 551 residues: Glucose-6-phosphate isomerase (551 aa).

Residues 161–162 (GS), 212–217 (SKTFTT), Gln-356, Glu-360, His-391, and Lys-516 contribute to the D-glucose 6-phosphate site. Glu-360 serves as the catalytic Proton donor. Active-site residues include His-391 and Lys-516.

This sequence belongs to the GPI family. In terms of assembly, homodimer.

It localises to the cytoplasm. Its subcellular location is the cytosol. It catalyses the reaction alpha-D-glucose 6-phosphate = beta-D-fructose 6-phosphate. The protein operates within carbohydrate degradation; glycolysis; D-glyceraldehyde 3-phosphate and glycerone phosphate from D-glucose: step 2/4. Its function is as follows. In the cytoplasm, catalyzes the conversion of glucose-6-phosphate to fructose-6-phosphate, the second step in glycolysis, and the reverse reaction during gluconeogenesis. This chain is Glucose-6-phosphate isomerase (gpi1), found in Agaricus bisporus (White button mushroom).